The following is a 273-amino-acid chain: Proteasome subunit beta (273 aa).

A propeptide spans 1 to 50 (removed in mature form; by autocatalysis); that stretch reads MRKDGARLALPLFDPRHDPGPDFAALVSRDAARTVPTSGDGSLGAQVPHG. T51 functions as the Nucleophile in the catalytic mechanism.

This sequence belongs to the peptidase T1B family. The 20S proteasome core is composed of 14 alpha and 14 beta subunits that assemble into four stacked heptameric rings, resulting in a barrel-shaped structure. The two inner rings, each composed of seven catalytic beta subunits, are sandwiched by two outer rings, each composed of seven alpha subunits. The catalytic chamber with the active sites is on the inside of the barrel. Has a gated structure, the ends of the cylinder being occluded by the N-termini of the alpha-subunits. Is capped by the proteasome-associated ATPase, ARC.

The protein resides in the cytoplasm. The catalysed reaction is Cleavage of peptide bonds with very broad specificity.. It functions in the pathway protein degradation; proteasomal Pup-dependent pathway. Its activity is regulated as follows. The formation of the proteasomal ATPase ARC-20S proteasome complex, likely via the docking of the C-termini of ARC into the intersubunit pockets in the alpha-rings, may trigger opening of the gate for substrate entry. Interconversion between the open-gate and close-gate conformations leads to a dynamic regulation of the 20S proteasome proteolysis activity. Its function is as follows. Component of the proteasome core, a large protease complex with broad specificity involved in protein degradation. The sequence is that of Proteasome subunit beta from Acidimicrobium ferrooxidans (strain DSM 10331 / JCM 15462 / NBRC 103882 / ICP).